A 199-amino-acid chain; its full sequence is 5'-deoxynucleotidase CKO_00504 (199 aa).

Substrate-binding positions include 18–19 (RW) and His-33. The HD domain occupies 30–142 (VSEHSLQVAM…VKQADALCAY (113 aa)). Residues His-33, His-68, and Asp-69 each coordinate a divalent metal cation. Residues Asp-69, 77-80 (DLPT), and Asp-137 each bind substrate. Asp-137 contacts a divalent metal cation.

It belongs to the 5DNU family. In terms of assembly, homodimer. The cofactor is a divalent metal cation.

The protein localises to the cytoplasm. It catalyses the reaction a 2'-deoxyribonucleoside 5'-phosphate + H2O = a 2'-deoxyribonucleoside + phosphate. Its function is as follows. Catalyzes the strictly specific dephosphorylation of 2'-deoxyribonucleoside 5'-monophosphates. In Citrobacter koseri (strain ATCC BAA-895 / CDC 4225-83 / SGSC4696), this protein is 5'-deoxynucleotidase CKO_00504.